A 181-amino-acid chain; its full sequence is Bifunctional protein PyrR (181 aa).

The PRPP-binding motif lies at 101–113; sequence VIVVDDVLYTGRT.

This sequence belongs to the purine/pyrimidine phosphoribosyltransferase family. PyrR subfamily. In terms of assembly, homodimer and homohexamer; in equilibrium.

The enzyme catalyses UMP + diphosphate = 5-phospho-alpha-D-ribose 1-diphosphate + uracil. In terms of biological role, regulates transcriptional attenuation of the pyrimidine nucleotide (pyr) operon by binding in a uridine-dependent manner to specific sites on pyr mRNA. This disrupts an antiterminator hairpin in the RNA and favors formation of a downstream transcription terminator, leading to a reduced expression of downstream genes. Its function is as follows. Also displays a weak uracil phosphoribosyltransferase activity which is not physiologically significant. This chain is Bifunctional protein PyrR, found in Bacillus velezensis (strain DSM 23117 / BGSC 10A6 / LMG 26770 / FZB42) (Bacillus amyloliquefaciens subsp. plantarum).